The primary structure comprises 500 residues: ATP synthase subunit alpha (500 aa).

168 to 175 (GDRQTGKT) is a binding site for ATP.

The protein belongs to the ATPase alpha/beta chains family. F-type ATPases have 2 components, CF(1) - the catalytic core - and CF(0) - the membrane proton channel. CF(1) has five subunits: alpha(3), beta(3), gamma(1), delta(1), epsilon(1). CF(0) has three main subunits: a(1), b(2) and c(9-12). The alpha and beta chains form an alternating ring which encloses part of the gamma chain. CF(1) is attached to CF(0) by a central stalk formed by the gamma and epsilon chains, while a peripheral stalk is formed by the delta and b chains.

The protein localises to the cell membrane. The enzyme catalyses ATP + H2O + 4 H(+)(in) = ADP + phosphate + 5 H(+)(out). Its function is as follows. Produces ATP from ADP in the presence of a proton gradient across the membrane. The alpha chain is a regulatory subunit. This is ATP synthase subunit alpha from Streptococcus suis (strain 98HAH33).